Reading from the N-terminus, the 39-residue chain is Photosystem II reaction center protein J (39 aa).

The helical transmembrane segment at 7-27 threads the bilayer; it reads IPLWLVATIGGIAVLTVLGLF.

This sequence belongs to the PsbJ family. In terms of assembly, PSII is composed of 1 copy each of membrane proteins PsbA, PsbB, PsbC, PsbD, PsbE, PsbF, PsbH, PsbI, PsbJ, PsbK, PsbL, PsbM, PsbT, PsbX, PsbY, PsbZ, Psb30/Ycf12, at least 3 peripheral proteins of the oxygen-evolving complex and a large number of cofactors. It forms dimeric complexes.

The protein resides in the plastid. Its subcellular location is the chloroplast thylakoid membrane. In terms of biological role, one of the components of the core complex of photosystem II (PSII). PSII is a light-driven water:plastoquinone oxidoreductase that uses light energy to abstract electrons from H(2)O, generating O(2) and a proton gradient subsequently used for ATP formation. It consists of a core antenna complex that captures photons, and an electron transfer chain that converts photonic excitation into a charge separation. This Cyanidioschyzon merolae (strain NIES-3377 / 10D) (Unicellular red alga) protein is Photosystem II reaction center protein J.